The chain runs to 3343 residues: Cadherin-3 (3343 aa).

The first 26 residues, 1 to 26 (MTIRIFFSIFLLNHLIFFHLFNFTHQ), serve as a signal peptide directing secretion. Asparagine 22 carries N-linked (GlcNAc...) asparagine glycosylation. Topologically, residues 27–3228 (FSEETIKFSV…LFSNFSNTTT (3202 aa)) are extracellular. Cadherin domains follow at residues 28–117 (SEET…SPIF), 118–229 (PIDV…PPNF), and 242–330 (PNTK…EPNI). Asparagine 149, asparagine 250, asparagine 288, asparagine 369, asparagine 467, and asparagine 612 each carry an N-linked (GlcNAc...) asparagine glycan. The region spanning 632–738 (ICQITEIHVL…EDVNDNVPKF (107 aa)) is the Cadherin 4 domain. Asparagine 752, asparagine 806, asparagine 941, asparagine 966, asparagine 970, asparagine 985, asparagine 1042, asparagine 1335, asparagine 1425, asparagine 1429, asparagine 1557, asparagine 1563, asparagine 1597, asparagine 1624, asparagine 1695, and asparagine 1702 each carry an N-linked (GlcNAc...) asparagine glycan. In terms of domain architecture, Cadherin 5 spans 1279–1368 (RENELMFEIE…ADVNDNKPKI (90 aa)). 3 Cadherin domains span residues 1545–1648 (DKAA…APRF), 1676–1756 (AEDL…TPEF), and 1757–1857 (ELSS…HPMI). Residues asparagine 1895 and asparagine 1900 are each glycosylated (N-linked (GlcNAc...) asparagine). Cadherin domains lie at 1954–2045 (TVSV…SPRF), 2046–2145 (DQQL…NAPR), and 2146–2245 (FSRI…APIF). N-linked (GlcNAc...) asparagine glycosylation is found at asparagine 2053, asparagine 2129, asparagine 2203, asparagine 2382, asparagine 2391, asparagine 2410, asparagine 2414, asparagine 2431, asparagine 2527, asparagine 2530, asparagine 2564, asparagine 2621, asparagine 2665, asparagine 2712, asparagine 2798, asparagine 2809, asparagine 2927, asparagine 2976, and asparagine 3045. The region spanning 3040-3205 (EISVRNGTSH…SSTGTSRNEC (166 aa)) is the Laminin G-like domain. A disulfide bridge connects residues cysteine 3172 and cysteine 3205. N-linked (GlcNAc...) asparagine glycosylation is found at asparagine 3222 and asparagine 3225. Residues 3229–3250 (LILLITLALISLIGFSVCLLAI) traverse the membrane as a helical segment. Residues 3251–3343 (RRRWRQKSPG…RDGHINMAYL (93 aa)) are Cytoplasmic-facing. Positions 3257-3277 (KSPGDQKQTERSNGWTGHVMP) are disordered.

In terms of tissue distribution, expressed in the anchor cell.

It localises to the cell membrane. The protein localises to the basolateral cell membrane. The protein resides in the cell junction. Its function is as follows. Cell adhesion protein involved in the control of epithelial morphogenesis. Together with metalloproteinase zmp-1 and hemicentin him-4, plays a role in anchor cell (AC) invasion during postembryonic vulval development. In Caenorhabditis elegans, this protein is Cadherin-3 (cdh-3).